We begin with the raw amino-acid sequence, 177 residues long: LOB domain-containing protein 33 (177 aa).

The LOB domain occupies 6–108; that stretch reads SSCGACKFLR…EEIEFLGSQM (103 aa).

It belongs to the LOB domain-containing protein family. In terms of tissue distribution, expressed in roots.

The chain is LOB domain-containing protein 33 (LBD33) from Arabidopsis thaliana (Mouse-ear cress).